A 913-amino-acid polypeptide reads, in one-letter code: Trafficking kinesin-binding protein 2 (913 aa).

The span at 11–21 shows a compositional bias: polar residues; that stretch reads SQTGEENLMSS. The interval 11–31 is disordered; it reads SQTGEENLMSSNHRDSESITD. The HAP1 N-terminal domain maps to 48-353; the sequence is EEQLPQYKLR…QEEIKELRNK (306 aa). Positions 134 to 355 form a coiled coil; sequence QALLKRNHVL…EIKELRNKAG (222 aa). The interaction with HGS stretch occupies residues 359–507; it reads HLCFSQAYGV…KQFFAEEWER (149 aa). The disordered stretch occupies residues 442–478; it reads ESGVQQTEDKTLPNQGSSTEVPGNSHPRDPPGLPEDS. The span at 453–463 shows a compositional bias: polar residues; sequence LPNQGSSTEVP. Residues 502-519 are a coiled coil; sequence AEEWERKLQILAEQEEEV. 2 stretches are compositionally biased toward low complexity: residues 688-704 and 780-789; these read SSGF…GSAS and PSQSPCSSPV. 2 disordered regions span residues 688 to 707 and 769 to 790; these read SSGF…SNTA and ALAT…SPVP.

The protein belongs to the milton family. As to quaternary structure, interacts with RHOT1/Miro-1 and RHOT2/Miro-2. Interacts with GABA-A receptor and O-GlcNAc transferase. Interacts with HGS. O-glycosylated. Present in heart and brain (at protein level).

The protein resides in the cytoplasm. The protein localises to the early endosome. It is found in the mitochondrion. Its function is as follows. May regulate endosome-to-lysosome trafficking of membrane cargo, including EGFR. This chain is Trafficking kinesin-binding protein 2 (Trak2), found in Rattus norvegicus (Rat).